The following is a 426-amino-acid chain: Synaptotagmin-13 (426 aa).

Residues methionine 1–proline 6 are Vesicular-facing. The chain crosses the membrane as a helical span at residues valine 7 to leucine 29. The Cytoplasmic portion of the chain corresponds to cysteine 30 to leucine 426. 2 C2 domains span residues glutamine 158–glycine 275 and glycine 287–histidine 422.

This sequence belongs to the synaptotagmin family. Interacts with NRXN1. As to expression, expressed in brain, spleen, kidney and testis.

It is found in the membrane. In terms of biological role, may be involved in transport vesicle docking to the plasma membrane. The chain is Synaptotagmin-13 (Syt13) from Rattus norvegicus (Rat).